Reading from the N-terminus, the 403-residue chain is Nodal homolog (403 aa).

The N-terminal stretch at 1–18 (MAFLTAVLCFGFACMVQG) is a signal peptide. Positions 19-278 (VPSWLESRIP…RMPGIRRHRR (260 aa)) are excised as a propeptide. N-linked (GlcNAc...) asparagine glycans are attached at residues N68, N133, and N169. A disordered region spans residues 195 to 220 (AERGSGMSSAEFLDSPGDSPQYNPHH). Cystine bridges form between C303/C369, C332/C400, and C336/C402. N-linked (GlcNAc...) asparagine glycosylation occurs at N341.

It belongs to the TGF-beta family. As to quaternary structure, homodimer; disulfide-linked. Interacts with, and is inhibited by cer1 and gdf10/bmp3b.

It localises to the secreted. Its function is as follows. Cooperation and regulatory loops of multiple nodals are essential for mesendoderm patterning in early embryos. Essential for mesoderm formation and axial patterning during embryonic development. Activates the activin-like signaling pathway to induce dorsal and ventral mesoderm in animal cap ectoderm. In addition, also dorsalizes ventral marginal zone (VMZ) tissues during gastrulation. Acts in a downstream signaling cascade via cripto and cer1 to mediate cardiogenesis in embryonic mesoderm. Directs the orientation of the left-right axis by driving the left-specific gene cascade in the left lateral plate mesoderm. The sequence is that of Nodal homolog from Xenopus tropicalis (Western clawed frog).